A 97-amino-acid chain; its full sequence is uncharacterized protein (97 aa).

This is an uncharacterized protein from Sulfolobus islandicus filamentous virus (isolate Iceland/Hveragerdi) (SIFV).